Reading from the N-terminus, the 463-residue chain is Eukaryotic translation initiation factor 3 subunit E (463 aa).

One can recognise a PCI domain in the interval 224 to 407 (FNLGENQGCQ…NMLHITRPHA (184 aa)). The tract at residues 432 to 463 (QSSVGEPRERGERGERGNKGGRGRPRTQEVAA) is disordered. Over residues 437-449 (EPRERGERGERGN) the composition is skewed to basic and acidic residues.

Belongs to the eIF-3 subunit E family. As to quaternary structure, component of the eukaryotic translation initiation factor 3 (eIF-3) complex.

It is found in the cytoplasm. Its function is as follows. Component of the eukaryotic translation initiation factor 3 (eIF-3) complex, which is involved in protein synthesis of a specialized repertoire of mRNAs and, together with other initiation factors, stimulates binding of mRNA and methionyl-tRNAi to the 40S ribosome. The eIF-3 complex specifically targets and initiates translation of a subset of mRNAs involved in cell proliferation. This chain is Eukaryotic translation initiation factor 3 subunit E, found in Cryptococcus neoformans var. neoformans serotype D (strain JEC21 / ATCC MYA-565) (Filobasidiella neoformans).